The sequence spans 117 residues: Large ribosomal subunit protein uL22 (117 aa).

It belongs to the universal ribosomal protein uL22 family. In terms of assembly, part of the 50S ribosomal subunit.

This protein binds specifically to 23S rRNA; its binding is stimulated by other ribosomal proteins, e.g. L4, L17, and L20. It is important during the early stages of 50S assembly. It makes multiple contacts with different domains of the 23S rRNA in the assembled 50S subunit and ribosome. Functionally, the globular domain of the protein is located near the polypeptide exit tunnel on the outside of the subunit, while an extended beta-hairpin is found that lines the wall of the exit tunnel in the center of the 70S ribosome. This chain is Large ribosomal subunit protein uL22, found in Lactobacillus gasseri (strain ATCC 33323 / DSM 20243 / BCRC 14619 / CIP 102991 / JCM 1131 / KCTC 3163 / NCIMB 11718 / NCTC 13722 / AM63).